The chain runs to 94 residues: Selenoprotein K (94 aa).

Residues 20 to 42 traverse the membrane as a helical segment; that stretch reads LSFITDFFWGIAEFVVFFFKTLL. The interval 48 to 94 is disordered; that stretch reads KRRGYGGSSDSRYDDGRGPPGNPPRRMGRISHLRGPSPPPMAGGUGR. Position 92 (Sec92) is a non-standard amino acid, selenocysteine.

The protein belongs to the selenoprotein K family. Interacts with DERL1, DERL2, DERL3 and SELENOS. The SELENOK-SELENOS complex interacts with VCP. Interacts with ZDHHC6. Post-translationally, cleaved by CAPN2/m-calpain in resting macrophages but not in activated macrophages. Macrophage activation up-regulates expression of the calpain inhibitor CAST/calpastatin, resulting in inhibition of CAPN2 activity. In terms of processing, truncated SELENOK proteins produced by failed UGA/Sec decoding are ubiquitinated by the CRL2(KLHDC2) complex, which recognizes the diglycine (Gly-Gly) at the C-terminus of truncated SELENOK proteins.

The protein resides in the endoplasmic reticulum membrane. It is found in the cell membrane. Required for Ca(2+) flux in immune cells and plays a role in T-cell proliferation and in T-cell and neutrophil migration. Involved in endoplasmic reticulum-associated degradation (ERAD) of soluble glycosylated proteins. Required for palmitoylation and cell surface expression of CD36 and involved in macrophage uptake of low-density lipoprotein and in foam cell formation. Together with ZDHHC6, required for palmitoylation of ITPR1 in immune cells, leading to regulate ITPR1 stability and function. Plays a role in protection of cells from ER stress-induced apoptosis. Protects cells from oxidative stress when overexpressed in cardiomyocytes. The polypeptide is Selenoprotein K (Rattus norvegicus (Rat)).